A 413-amino-acid chain; its full sequence is Na(+)/H(+) antiporter NhaA (413 aa).

The next 11 helical transmembrane spans lie at 15 to 35, 57 to 77, 93 to 113, 123 to 143, 152 to 172, 175 to 195, 211 to 231, 261 to 281, 295 to 315, 333 to 353, and 364 to 384; these read LESG…ALFV, LLHW…GLEI, ALPC…YASL, GWAI…SLLG, IFLA…IAVF, AELN…LLGF, VALW…GVVL, WVAF…SFAG, VALG…WLAI, GVSL…LLAF, and VGVL…LSLT.

This sequence belongs to the NhaA Na(+)/H(+) (TC 2.A.33) antiporter family.

The protein localises to the cell inner membrane. It carries out the reaction Na(+)(in) + 2 H(+)(out) = Na(+)(out) + 2 H(+)(in). Its function is as follows. Na(+)/H(+) antiporter that extrudes sodium in exchange for external protons. The chain is Na(+)/H(+) antiporter NhaA from Caulobacter vibrioides (strain ATCC 19089 / CIP 103742 / CB 15) (Caulobacter crescentus).